The sequence spans 307 residues: 2-carboxy-1,4-naphthoquinone phytyltransferase (307 aa).

8 consecutive transmembrane segments (helical) span residues 27–47, 51–71, 98–118, 125–145, 147–167, 177–197, 223–243, and 284–304; these read MYTVAVVPITVGSAVAYGLTG, GDVFTIFLLSAIAIIAWINLS, LVFLISNFFLLAGVLGLMSMS, TVLELIGVAIFLGYTYQGPPF, LGYLGLGELICLITFGPLAIA, FSWNLLTPSVFVGISTAIILF, LGSQVLTLSVVSLYLITAIGV, and FIAVNLHFFSGMLMAAGYGWA.

The protein belongs to the MenA family. Type 2 subfamily.

The protein localises to the cell inner membrane. The catalysed reaction is 2-carboxy-1,4-naphthoquinone + phytyl diphosphate + H(+) = demethylphylloquinone + CO2 + diphosphate. The protein operates within cofactor biosynthesis; phylloquinone biosynthesis. Involved in the synthesis of phylloquinone (vitamin K1). Catalyzes the transfer of a prenyl chain to 2-carboxy-1,4-naphthoquinone. This chain is 2-carboxy-1,4-naphthoquinone phytyltransferase, found in Synechocystis sp. (strain ATCC 27184 / PCC 6803 / Kazusa).